A 274-amino-acid chain; its full sequence is MSASGEVSTARDYIGHHLNNLQLDLRTFELVDPNSGGSATFWTLNIDSLFFSVVLGILFLYVFRKVAVNATSGVPGKLQTAIELIMGFVDNSVRDMYHGKSKVIAPLALTVFVWVLLMNVMDLLPIDFLPYIGEHFFGLPALRVVPTADVSVTLSMAIGVFVLILYYSIKMKGIGGFTKELTLQPFNHPLFIPINLILEGVSLLSKPVSLGLRLFGNMYAGELIFILIAGLLPWWSQWLLSLPWAIFHILIITLQAFIFMVLTIVYLSMASEEH.

5 helical membrane passes run 43–63 (TLNI…LYVF), 103–123 (VIAP…VMDL), 144–164 (VVPT…FVLI), 223–243 (LIFI…LSLP), and 245–265 (AIFH…LTIV).

Belongs to the ATPase A chain family. As to quaternary structure, F-type ATPases have 2 components, CF(1) - the catalytic core - and CF(0) - the membrane proton channel. CF(1) has five subunits: alpha(3), beta(3), gamma(1), delta(1), epsilon(1). CF(0) has three main subunits: a(1), b(2) and c(9-12). The alpha and beta chains form an alternating ring which encloses part of the gamma chain. CF(1) is attached to CF(0) by a central stalk formed by the gamma and epsilon chains, while a peripheral stalk is formed by the delta and b chains.

The protein resides in the cell inner membrane. Its function is as follows. Key component of the proton channel; it plays a direct role in the translocation of protons across the membrane. The sequence is that of ATP synthase subunit a from Photorhabdus laumondii subsp. laumondii (strain DSM 15139 / CIP 105565 / TT01) (Photorhabdus luminescens subsp. laumondii).